The following is a 114-amino-acid chain: Dihydroneopterin monophosphate aldolase (114 aa).

H15, H26, and H28 together coordinate Zn(2+).

The protein belongs to the PTPS family. Zn(2+) serves as cofactor.

The enzyme catalyses 7,8-dihydroneopterin 3'-phosphate = glycolaldehyde phosphate + 6-hydroxymethyl-7,8-dihydropterin. Functionally, catalyzes the conversion of 7,8-dihydroneopterin monophosphate (H2NMP) to 6-hydroxymethyl-7,8-dihydropterin (6-HMD). Cannot use 7,8-dihydroneopterin (H2Neo) or 7,8-dihydroneopterin triphosphate (H2NTP) as substrate. This is Dihydroneopterin monophosphate aldolase from Pyrococcus furiosus (strain ATCC 43587 / DSM 3638 / JCM 8422 / Vc1).